The sequence spans 135 residues: Small ribosomal subunit protein uS12 (135 aa).

Asp-89 bears the 3-methylthioaspartic acid mark. Residues 114 to 135 form a disordered region; sequence RSRYGAKKGAAKQAAAAKSKKK. The span at 124–135 shows a compositional bias: low complexity; sequence AKQAAAAKSKKK.

The protein belongs to the universal ribosomal protein uS12 family. In terms of assembly, part of the 30S ribosomal subunit. Contacts proteins S8 and S17. May interact with IF1 in the 30S initiation complex.

In terms of biological role, with S4 and S5 plays an important role in translational accuracy. Its function is as follows. Interacts with and stabilizes bases of the 16S rRNA that are involved in tRNA selection in the A site and with the mRNA backbone. Located at the interface of the 30S and 50S subunits, it traverses the body of the 30S subunit contacting proteins on the other side and probably holding the rRNA structure together. The combined cluster of proteins S8, S12 and S17 appears to hold together the shoulder and platform of the 30S subunit. This is Small ribosomal subunit protein uS12 from Amoebophilus asiaticus (strain 5a2).